Reading from the N-terminus, the 198-residue chain is Transcription factor IND (198 aa).

The tract at residues 1–33 (MENGMYKKKGVCDSCVSSKSRSNHSPKRSMMEP) is disordered. One can recognise a bHLH domain in the interval 118–167 (ISDDPQTVVARRRRERISEKIRILKRIVPGGAKMDTASMLDEAIRYTKFL).

Homodimer. Heterodimer; possibly with ALC. After fertilization, it is expressed in stripes about four cells wide at the margins of developing wild-type fruit. Also expressed in the inner valve layer, which becomes lignified later in fruit development. Detected in roots.

The protein localises to the nucleus. In terms of biological role, transcription regulator required for seed dispersal. Involved in the differentiation of all three cell types required for fruit dehiscence. Acts as the key regulator in a network including SHP and ALC that controls specification of the valve margin. Works with ALC, SHP, and FUL to allow differentiation of the lignified valve layer, the spring-loaded mechanism of fruit that promotes opening. Regulates the expression of the YJ80 marker. This chain is Transcription factor IND (IND), found in Arabidopsis thaliana (Mouse-ear cress).